The chain runs to 431 residues: Female gametocyte surface protein P47 (431 aa).

The first 20 residues, 1–20 (MKGFTGASIIVFYLIKGYLS), serve as a signal peptide directing secretion. The 6-Cys 1 domain occupies 26–178 (NGYVCDFKFN…GLVKIILNNQ (153 aa)). 3 disulfides stabilise this stretch: C30–C55, C70–C145, and C88–C143. A glycan (N-linked (GlcNAc...) asparagine) is linked at N45. N239 carries an N-linked (GlcNAc...) asparagine glycan. Residues 278–413 (NIDGCDFTVP…MELKISSSKN (136 aa)) enclose the 6-Cys 2 domain. 3 disulfide bridges follow: C282-C309, C326-C395, and C335-C393. S409 carries the GPI-anchor amidated serine lipid modification. A propeptide spans 410-431 (SSKNIFISFILLSIIVSIFYLF) (removed in mature form).

It is found in the cell surface. Its subcellular location is the cell membrane. Its function is as follows. Required for female fertility. This is Female gametocyte surface protein P47 (PB47) from Plasmodium berghei (strain Anka).